A 230-amino-acid chain; its full sequence is Ion-translocating oxidoreductase complex subunit E (230 aa).

6 consecutive transmembrane segments (helical) span residues 11 to 31 (GMWA…LLAV), 39 to 59 (LGLG…VSLV), 69 to 89 (IPVF…LMNA), 93 to 113 (GLYL…IIIG), 132 to 152 (FWMG…REII), and 182 to 202 (SFLL…LIAL).

It belongs to the NqrDE/RnfAE family. The complex is composed of six subunits: RnfA, RnfB, RnfC, RnfD, RnfE and RnfG.

The protein localises to the cell inner membrane. Part of a membrane-bound complex that couples electron transfer with translocation of ions across the membrane. This chain is Ion-translocating oxidoreductase complex subunit E, found in Vibrio atlanticus (strain LGP32) (Vibrio splendidus (strain Mel32)).